Reading from the N-terminus, the 310-residue chain is Vomeronasal type-1 receptor 47 (310 aa).

Residues 1-16 (MNENSRLHTHSNIRNT) are Extracellular-facing. A helical transmembrane segment spans residues 17 to 37 (FFSEIGIGISGNSFLLLFHII). The Cytoplasmic segment spans residues 38-49 (KFFRGHRPRLTD). A helical membrane pass occupies residues 50–70 (LPIGLLSLIHLLMLLVAAVIA). Topologically, residues 71 to 91 (TDIFISWRGWNDIICKFLVYL) are extracellular. Residues cysteine 85 and cysteine 172 are joined by a disulfide bond. A helical membrane pass occupies residues 92–114 (YRSLRGLSLCTTSMLSVLQAIIL). Residues 115–131 (SPRSYCLAKFKRKSSHN) are Cytoplasmic-facing. The helical transmembrane segment at 132 to 152 (ISCAIIFLSVLYMSISSHLFI) threads the bilayer. The Extracellular portion of the chain corresponds to 153–193 (SITATLNLTMNNFLYVSQSCSLLPLSYLMQSMYSTLLVLRE). The N-linked (GlcNAc...) asparagine glycan is linked to asparagine 159. The chain crosses the membrane as a helical span at residues 194–214 (VFLIGLMVLSTSYMVALLCMH). Residues 215–238 (RKQAQNLQGTSLSLKTAPEQRATQ) lie on the Cytoplasmic side of the membrane. A helical membrane pass occupies residues 239–259 (TILMLMTFFVLMSIFDSIVSS). Residues 260–269 (SRAMFLDDST) are Extracellular-facing. The chain crosses the membrane as a helical span at residues 270–290 (CYSIYIFVMHIYATVSPFVFM). Residues 291–310 (STEKHLVNFFRSMCEWIINM) are Cytoplasmic-facing.

This sequence belongs to the G-protein coupled receptor 1 family.

The protein localises to the cell membrane. In terms of biological role, putative pheromone receptor implicated in the regulation of social and reproductive behavior. The polypeptide is Vomeronasal type-1 receptor 47 (Vmn1r47) (Mus musculus (Mouse)).